The primary structure comprises 244 residues: Sortase B (244 aa).

The Cytoplasmic portion of the chain corresponds to 1–6; it reads MRMKRF. The helical transmembrane segment at 7–24 threads the bilayer; sequence LTIVQILLVVIIIIFGYK. The Extracellular portion of the chain corresponds to 25 to 244; that stretch reads IVQTYIEDKQ…VVVAKIIKVS (220 aa). The active-site Acyl-thioester intermediate is the Cys-223.

This sequence belongs to the bacterial sortase family. Class B subfamily.

It localises to the cell membrane. It carries out the reaction The enzyme catalyzes a cell wall sorting reaction in which a surface protein with a sorting signal containing a NPXTN motif is cleaved between the Thr and Asn residue. The resulting threonine carboxyl end of the protein is covalently attached to a pentaglycine cross-bridge of peptidoglycan.. With respect to regulation, inhibited by MTSET (2-(Trimethylammonium)-ethyl-methanethiosulfonate) and E64 ([n- (l-3-trans-carboxyoxirane-2-carbonyl)-l-leucyl]-amido(4-guanido)butane). Inhibited by coptisine. In terms of biological role, transpeptidase that anchors surface proteins to the cell wall. Recognizes and modifies its substrate by proteolytic cleavage of a C-terminal sorting signal. Following cleavage, a covalent intermediate is formed via a thioester bond between the sortase and its substrate, which is then transferred and covalently attached to the cell wall. This sortase recognizes an Asn-Pro-Gln-Thr-Asn (NPQTN) motif in IsdC, which is cleaved by the sortase between the threonine and aspargine residues; may only have 1 substrate in this bacterium. May be dedicated to the process of iron acquisition during bacterial infection. In Staphylococcus aureus (strain NCTC 8325 / PS 47), this protein is Sortase B.